Here is a 233-residue protein sequence, read N- to C-terminus: Phosphatidylserine decarboxylase proenzyme (233 aa).

Ser-188 functions as the Schiff-base intermediate with substrate; via pyruvic acid in the catalytic mechanism. Ser-188 carries the pyruvic acid (Ser); by autocatalysis modification.

This sequence belongs to the phosphatidylserine decarboxylase family. PSD-A subfamily. Heterodimer of a large membrane-associated beta subunit and a small pyruvoyl-containing alpha subunit. The cofactor is pyruvate. Is synthesized initially as an inactive proenzyme. Formation of the active enzyme involves a self-maturation process in which the active site pyruvoyl group is generated from an internal serine residue via an autocatalytic post-translational modification. Two non-identical subunits are generated from the proenzyme in this reaction, and the pyruvate is formed at the N-terminus of the alpha chain, which is derived from the carboxyl end of the proenzyme. The post-translation cleavage follows an unusual pathway, termed non-hydrolytic serinolysis, in which the side chain hydroxyl group of the serine supplies its oxygen atom to form the C-terminus of the beta chain, while the remainder of the serine residue undergoes an oxidative deamination to produce ammonia and the pyruvoyl prosthetic group on the alpha chain.

It is found in the cell membrane. It carries out the reaction a 1,2-diacyl-sn-glycero-3-phospho-L-serine + H(+) = a 1,2-diacyl-sn-glycero-3-phosphoethanolamine + CO2. The protein operates within phospholipid metabolism; phosphatidylethanolamine biosynthesis; phosphatidylethanolamine from CDP-diacylglycerol: step 2/2. Its function is as follows. Catalyzes the formation of phosphatidylethanolamine (PtdEtn) from phosphatidylserine (PtdSer). In Ruegeria sp. (strain TM1040) (Silicibacter sp.), this protein is Phosphatidylserine decarboxylase proenzyme.